A 116-amino-acid polypeptide reads, in one-letter code: Ribonuclease P protein component (116 aa).

The protein belongs to the RnpA family. As to quaternary structure, consists of a catalytic RNA component (M1 or rnpB) and a protein subunit.

It catalyses the reaction Endonucleolytic cleavage of RNA, removing 5'-extranucleotides from tRNA precursor.. In terms of biological role, RNaseP catalyzes the removal of the 5'-leader sequence from pre-tRNA to produce the mature 5'-terminus. It can also cleave other RNA substrates such as 4.5S RNA. The protein component plays an auxiliary but essential role in vivo by binding to the 5'-leader sequence and broadening the substrate specificity of the ribozyme. This is Ribonuclease P protein component from Mycobacterium bovis (strain ATCC BAA-935 / AF2122/97).